Consider the following 313-residue polypeptide: RHOMBOID-like protein 7 (313 aa).

Acidic residues predominate over residues 1-11; the sequence is MLSTAAEEDPE. Positions 1–24 are disordered; it reads MLSTAAEEDPEGGSRETNNGGETT. The span at 15–24 shows a compositional bias: polar residues; the sequence is RETNNGGETT. Transmembrane regions (helical) follow at residues 31-51, 112-132, 143-163, 166-186, 196-216, 221-241, and 269-289; these read SWII…VMYY, WLHA…YIGV, VGTI…LFLE, ISVG…SELL, GVAI…GTLP, FAHI…LIHP, and LCIV…VILF. Residue Ser-171 is the Nucleophile of the active site. Residue His-223 is the Charge relay system of the active site.

Belongs to the peptidase S54 family.

It localises to the membrane. It catalyses the reaction Cleaves type-1 transmembrane domains using a catalytic dyad composed of serine and histidine that are contributed by different transmembrane domains.. Its function is as follows. Probable rhomboid-type serine protease that catalyzes intramembrane proteolysis. May function in embryo development. In Arabidopsis thaliana (Mouse-ear cress), this protein is RHOMBOID-like protein 7.